Here is a 70-residue protein sequence, read N- to C-terminus: Protein SlyX homolog (70 aa).

This sequence belongs to the SlyX family.

The chain is Protein SlyX homolog from Shewanella frigidimarina (strain NCIMB 400).